Consider the following 93-residue polypeptide: Regulatory protein RepI (93 aa).

Its function is as follows. This protein is involved in regulating the plasmid copy-number. Increasing the level of this protein results in a higher plasmid copy-number. This chain is Regulatory protein RepI (repI), found in Escherichia coli.